The chain runs to 448 residues: Tubby-like F-box protein 3 (448 aa).

An F-box domain is found at 56–102 (ESRWASLPPELLREVIRRLEADESTWPSRRNVVCFAAVCRTWREMCK). A compositionally biased stretch (pro residues) spans 387 to 403 (PSPPPAGAPTPSQPGPA). The disordered stretch occupies residues 387-406 (PSPPPAGAPTPSQPGPADPE).

Belongs to the TUB family. In terms of tissue distribution, expressed in roots, leaves, flowers and seeds.

The chain is Tubby-like F-box protein 3 (TULP3) from Oryza sativa subsp. japonica (Rice).